Here is a 107-residue protein sequence, read N- to C-terminus: Putative double-stranded DNA mimic protein ETA_15890 (107 aa).

It belongs to the putative dsDNA mimic protein family.

Its function is as follows. May act as a double-stranded DNA (dsDNA) mimic. Probably regulates the activity of a dsDNA-binding protein. The sequence is that of Putative double-stranded DNA mimic protein ETA_15890 from Erwinia tasmaniensis (strain DSM 17950 / CFBP 7177 / CIP 109463 / NCPPB 4357 / Et1/99).